A 134-amino-acid chain; its full sequence is Thioredoxin H2-2 (134 aa).

The interval 1–20 (MGSFFSTMFTPPPAADDGGD) is disordered. The Thioredoxin domain occupies 3–130 (SFFSTMFTPP…LERKVNMFIS (128 aa)). Active-site nucleophile residues include cysteine 56 and cysteine 59. Cysteines 56 and 59 form a disulfide.

The protein belongs to the thioredoxin family. Plant H-type subfamily.

It is found in the cytoplasm. Functionally, probable thiol-disulfide oxidoreductase that may be involved in the redox regulation of a number of cytosolic enzymes. The sequence is that of Thioredoxin H2-2 from Oryza sativa subsp. japonica (Rice).